The following is a 382-amino-acid chain: Anhydro-N-acetylmuramic acid kinase (382 aa).

9-16 lines the ATP pocket; the sequence is GTSLDGID.

Belongs to the anhydro-N-acetylmuramic acid kinase family.

The enzyme catalyses 1,6-anhydro-N-acetyl-beta-muramate + ATP + H2O = N-acetyl-D-muramate 6-phosphate + ADP + H(+). It participates in amino-sugar metabolism; 1,6-anhydro-N-acetylmuramate degradation. The protein operates within cell wall biogenesis; peptidoglycan recycling. Its function is as follows. Catalyzes the specific phosphorylation of 1,6-anhydro-N-acetylmuramic acid (anhMurNAc) with the simultaneous cleavage of the 1,6-anhydro ring, generating MurNAc-6-P. Is required for the utilization of anhMurNAc either imported from the medium or derived from its own cell wall murein, and thus plays a role in cell wall recycling. The polypeptide is Anhydro-N-acetylmuramic acid kinase (Bacillus cereus (strain Q1)).